The chain runs to 351 residues: Auxin efflux carrier component 5 (351 aa).

Transmembrane regions (helical) follow at residues 7-27, 39-59, 71-91, 100-120, 132-152, 210-230, 234-254, 271-291, 295-315, and 329-349; these read VYKV…GYGS, CDAI…IEFT, FIAA…LWAK, WSIT…GVPL, LVVQ…LFVL, ILGI…PGIL, ILIM…IFMA, MVLK…VLGL, VLRV…FIFA, and VIFG…ALEF.

Belongs to the auxin efflux carrier (TC 2.A.69.1) family. As to expression, expressed in elongating parts of hypocotyl, cotyledon vasculature and guard cells. Detected in root pericycle and root tip and at later developmental stages in leaves, stems and flowers. Expressed in veins of mature leaves.

The protein resides in the endoplasmic reticulum membrane. It localises to the cell membrane. Auxin transporter regulating intracellular auxin homeostasis and metabolism. Mediates the auxin transport from the cytosol into the lumen of the endoplasmic reticulum. May also act as an auxin efflux carrier when located to the cell membrane. PIN5 and PIN8 may have an antagonistic/compensatory activity. Involved in unfolded protein response (UPR) activation. Involved in the control of vein patterning. Promotes vein formation. PIN5, PIN6, and PIN8 control vein network geometry, but they are expressed in mutually exclusive domains of leaf vascular cells. In Arabidopsis thaliana (Mouse-ear cress), this protein is Auxin efflux carrier component 5.